Consider the following 195-residue polypeptide: Imidazoleglycerol-phosphate dehydratase (195 aa).

This sequence belongs to the imidazoleglycerol-phosphate dehydratase family.

The protein resides in the cytoplasm. It carries out the reaction D-erythro-1-(imidazol-4-yl)glycerol 3-phosphate = 3-(imidazol-4-yl)-2-oxopropyl phosphate + H2O. Its pathway is amino-acid biosynthesis; L-histidine biosynthesis; L-histidine from 5-phospho-alpha-D-ribose 1-diphosphate: step 6/9. In Thermotoga neapolitana (strain ATCC 49049 / DSM 4359 / NBRC 107923 / NS-E), this protein is Imidazoleglycerol-phosphate dehydratase.